The following is a 519-amino-acid chain: MIOREX complex component 12 (519 aa).

Residues 1 to 35 (MLRSLHSAATLSNKRFYSLISHSNRKNIIKKLLRH) constitute a mitochondrion transit peptide.

As to quaternary structure, associates with the mitochondrial ribosome.

Its subcellular location is the mitochondrion. Its function is as follows. Component of MIOREX complexes, large expressome-like assemblies of ribosomes with factors involved in all the steps of post-transcriptional gene expression. The protein is MIOREX complex component 12 of Saccharomyces cerevisiae (strain ATCC 204508 / S288c) (Baker's yeast).